Consider the following 128-residue polypeptide: Nanos homolog 1 (128 aa).

The segment at 7–23 is essential for its translational repressor activity; the sequence is FDSWSDYLGLSSLISRG. Residues 25–52 are disordered; the sequence is QPQREGERPRWDVLSPASAEPLPSNESV. The Nanos-type zinc-finger motif lies at 56–110; that stretch reads GCGFCRSNREALSLYTSHRLRALDGRVLCPVLRGYTCPLCGANGDWAHTMRYCPL. 8 residues coordinate Zn(2+): C57, C60, H73, C84, C92, C95, H103, and C108. 2 consecutive short sequence motifs (C2HC) follow at residues 57-84 and 92-108; these read CGFC…RVLC and CPLC…MRYC.

This sequence belongs to the nanos family. In terms of assembly, interacts with ccnb1. In terms of tissue distribution, ovary and testis.

The protein resides in the cytoplasm. Its subcellular location is the perinuclear region. Acts as a translational repressor. Can mediate repression affecting different steps in the translation process: cap-driven, IRES-driven, polyadenylated RNAs or nonpolyadenylated RNAs. Essential for the development of primordial germ cells (PGCs) by ensuring their proper migration and survival. This Xenopus laevis (African clawed frog) protein is Nanos homolog 1 (nanos1).